The chain runs to 205 residues: ATP phosphoribosyltransferase (205 aa).

The protein belongs to the ATP phosphoribosyltransferase family. Short subfamily. In terms of assembly, heteromultimer composed of HisG and HisZ subunits.

The protein localises to the cytoplasm. The catalysed reaction is 1-(5-phospho-beta-D-ribosyl)-ATP + diphosphate = 5-phospho-alpha-D-ribose 1-diphosphate + ATP. Its pathway is amino-acid biosynthesis; L-histidine biosynthesis; L-histidine from 5-phospho-alpha-D-ribose 1-diphosphate: step 1/9. Catalyzes the condensation of ATP and 5-phosphoribose 1-diphosphate to form N'-(5'-phosphoribosyl)-ATP (PR-ATP). Has a crucial role in the pathway because the rate of histidine biosynthesis seems to be controlled primarily by regulation of HisG enzymatic activity. This Ruthia magnifica subsp. Calyptogena magnifica protein is ATP phosphoribosyltransferase.